A 124-amino-acid polypeptide reads, in one-letter code: Small ribosomal subunit protein bS6 (124 aa).

The segment at 96 to 124 (ETGPSPMMKEVQREEAKKSAATQPSEAQA) is disordered. Polar residues predominate over residues 115 to 124 (AATQPSEAQA).

The protein belongs to the bacterial ribosomal protein bS6 family.

In terms of biological role, binds together with bS18 to 16S ribosomal RNA. The chain is Small ribosomal subunit protein bS6 from Paraburkholderia phytofirmans (strain DSM 17436 / LMG 22146 / PsJN) (Burkholderia phytofirmans).